The sequence spans 325 residues: GMP reductase (325 aa).

Cys173 serves as the catalytic Thioimidate intermediate. 202 to 225 provides a ligand contact to NADP(+); it reads IIADGGIRSHGDIAKSVRFGATMV.

This sequence belongs to the IMPDH/GMPR family. GuaC type 2 subfamily.

It carries out the reaction IMP + NH4(+) + NADP(+) = GMP + NADPH + 2 H(+). Functionally, catalyzes the irreversible NADPH-dependent deamination of GMP to IMP. It functions in the conversion of nucleobase, nucleoside and nucleotide derivatives of G to A nucleotides, and in maintaining the intracellular balance of A and G nucleotides. The sequence is that of GMP reductase from Acidovorax sp. (strain JS42).